We begin with the raw amino-acid sequence, 423 residues long: Glutamyl-tRNA reductase 2 (423 aa).

Substrate contacts are provided by residues 48 to 51 (TCYR), S103, 108 to 110 (EPQ), and Q114. Catalysis depends on C49, which acts as the Nucleophile. Residue 183–188 (GAGEMA) coordinates NADP(+).

It belongs to the glutamyl-tRNA reductase family. Homodimer.

The enzyme catalyses (S)-4-amino-5-oxopentanoate + tRNA(Glu) + NADP(+) = L-glutamyl-tRNA(Glu) + NADPH + H(+). Its pathway is porphyrin-containing compound metabolism; protoporphyrin-IX biosynthesis; 5-aminolevulinate from L-glutamyl-tRNA(Glu): step 1/2. Its function is as follows. Catalyzes the NADPH-dependent reduction of glutamyl-tRNA(Glu) to glutamate 1-semialdehyde (GSA). This is Glutamyl-tRNA reductase 2 from Anaeromyxobacter sp. (strain Fw109-5).